The following is a 94-amino-acid chain: Small ribosomal subunit protein uS19 (94 aa).

Belongs to the universal ribosomal protein uS19 family.

Its function is as follows. Protein S19 forms a complex with S13 that binds strongly to the 16S ribosomal RNA. The chain is Small ribosomal subunit protein uS19 from Dictyoglomus turgidum (strain DSM 6724 / Z-1310).